We begin with the raw amino-acid sequence, 482 residues long: tRNA sulfurtransferase (482 aa).

The THUMP domain occupies 61 to 165; the sequence is LTIRDALTRI…DDRLLLIKGR (105 aa). ATP is bound by residues 183-184, K265, G287, and Q296; that span reads LI. C344 and C456 are joined by a disulfide. Residues 404 to 482 enclose the Rhodanese domain; sequence CGPNDVILDI…GFNNVKVYRP (79 aa). C456 serves as the catalytic Cysteine persulfide intermediate.

This sequence belongs to the ThiI family.

The protein localises to the cytoplasm. The catalysed reaction is [ThiI sulfur-carrier protein]-S-sulfanyl-L-cysteine + a uridine in tRNA + 2 reduced [2Fe-2S]-[ferredoxin] + ATP + H(+) = [ThiI sulfur-carrier protein]-L-cysteine + a 4-thiouridine in tRNA + 2 oxidized [2Fe-2S]-[ferredoxin] + AMP + diphosphate. It catalyses the reaction [ThiS sulfur-carrier protein]-C-terminal Gly-Gly-AMP + S-sulfanyl-L-cysteinyl-[cysteine desulfurase] + AH2 = [ThiS sulfur-carrier protein]-C-terminal-Gly-aminoethanethioate + L-cysteinyl-[cysteine desulfurase] + A + AMP + 2 H(+). It functions in the pathway cofactor biosynthesis; thiamine diphosphate biosynthesis. In terms of biological role, catalyzes the ATP-dependent transfer of a sulfur to tRNA to produce 4-thiouridine in position 8 of tRNAs, which functions as a near-UV photosensor. Also catalyzes the transfer of sulfur to the sulfur carrier protein ThiS, forming ThiS-thiocarboxylate. This is a step in the synthesis of thiazole, in the thiamine biosynthesis pathway. The sulfur is donated as persulfide by IscS. The chain is tRNA sulfurtransferase from Shigella dysenteriae serotype 1 (strain Sd197).